The sequence spans 292 residues: 4-hydroxy-tetrahydrodipicolinate synthase (292 aa).

Pyruvate is bound at residue T44. Y132 functions as the Proton donor/acceptor in the catalytic mechanism. K161 serves as the catalytic Schiff-base intermediate with substrate. I203 is a pyruvate binding site.

The protein belongs to the DapA family. Homotetramer.

The protein resides in the cytoplasm. It carries out the reaction L-aspartate 4-semialdehyde + pyruvate = (2S,4S)-4-hydroxy-2,3,4,5-tetrahydrodipicolinate + H2O + H(+). The protein operates within amino-acid biosynthesis; L-lysine biosynthesis via DAP pathway; (S)-tetrahydrodipicolinate from L-aspartate: step 3/4. Its activity is regulated as follows. Is feedback inhibited by lysine. Is competitively inhibited by 2-oxobutyrate with respect to pyruvate. Its function is as follows. Catalyzes the condensation of (S)-aspartate-beta-semialdehyde [(S)-ASA] and pyruvate to 4-hydroxy-tetrahydrodipicolinate (HTPA). The polypeptide is 4-hydroxy-tetrahydrodipicolinate synthase (Rhizobium meliloti (Ensifer meliloti)).